Reading from the N-terminus, the 238-residue chain is Ribitol-5-phosphate cytidylyltransferase (238 aa).

Residues 7 to 10 and 81 to 87 contribute to the CTP site; these read LAGG and GDDRNHT.

This sequence belongs to the IspD/TarI cytidylyltransferase family. TarI subfamily.

The enzyme catalyses D-ribitol 5-phosphate + CTP + H(+) = CDP-L-ribitol + diphosphate. It functions in the pathway cell wall biogenesis; poly(ribitol phosphate) teichoic acid biosynthesis. Functionally, catalyzes the transfer of the cytidylyl group of CTP to D-ribitol 5-phosphate. In Staphylococcus epidermidis (strain ATCC 35984 / DSM 28319 / BCRC 17069 / CCUG 31568 / BM 3577 / RP62A), this protein is Ribitol-5-phosphate cytidylyltransferase.